Consider the following 547-residue polypeptide: Cytochrome P450 78A1 (547 aa).

Residues 84–94 (ASSRCPGAAAP) show a composition bias toward low complexity. The tract at residues 84–104 (ASSRCPGAAAPRPRRDGPRRR) is disordered. Position 490 (Cys490) interacts with heme.

The protein belongs to the cytochrome P450 family. The cofactor is heme. As to expression, shoot apex.

In Zea mays (Maize), this protein is Cytochrome P450 78A1 (CYP78A1).